The following is a 512-amino-acid chain: uncharacterized protein (512 aa).

A run of 2 helical transmembrane segments spans residues 20–40 (IFPV…IYIW) and 222–242 (GIAL…FGYI). The Histidine kinase domain maps to 297-512 (EQLIQSIEQT…TLMCYQIPLV (216 aa)). The residue at position 325 (histidine 325) is a Phosphohistidine; by autocatalysis.

Autophosphorylated.

The protein resides in the cell membrane. The enzyme catalyses ATP + protein L-histidine = ADP + protein N-phospho-L-histidine.. In terms of biological role, probable member of the two-component regulatory system SE_0166/SE_0165. May activate SE_0165 by phosphorylation. This is an uncharacterized protein from Staphylococcus epidermidis (strain ATCC 12228 / FDA PCI 1200).